A 255-amino-acid chain; its full sequence is Octanoyltransferase (255 aa).

A BPL/LPL catalytic domain is found at 54–238 (GDAAELVWLL…AFTEIFGATV (185 aa)). Substrate contacts are provided by residues 92–99 (RGGQLTYH), 167–169 (AIG), and 180–182 (GIA). Catalysis depends on Cys-198, which acts as the Acyl-thioester intermediate.

Belongs to the LipB family.

It is found in the cytoplasm. It carries out the reaction octanoyl-[ACP] + L-lysyl-[protein] = N(6)-octanoyl-L-lysyl-[protein] + holo-[ACP] + H(+). The protein operates within protein modification; protein lipoylation via endogenous pathway; protein N(6)-(lipoyl)lysine from octanoyl-[acyl-carrier-protein]: step 1/2. Catalyzes the transfer of endogenously produced octanoic acid from octanoyl-acyl-carrier-protein onto the lipoyl domains of lipoate-dependent enzymes. Lipoyl-ACP can also act as a substrate although octanoyl-ACP is likely to be the physiological substrate. This Rhodopseudomonas palustris (strain HaA2) protein is Octanoyltransferase.